The primary structure comprises 113 residues: Small ribosomal subunit protein bS18 (113 aa).

Residues 1–41 (MSEEKIVNTEAAPEAVAERPARAERSERPERPAKGPFGKKR) form a disordered region. The span at 16–33 (VAERPARAERSERPERPA) shows a compositional bias: basic and acidic residues.

The protein belongs to the bacterial ribosomal protein bS18 family. As to quaternary structure, part of the 30S ribosomal subunit. Forms a tight heterodimer with protein bS6.

Its function is as follows. Binds as a heterodimer with protein bS6 to the central domain of the 16S rRNA, where it helps stabilize the platform of the 30S subunit. The polypeptide is Small ribosomal subunit protein bS18 (Elusimicrobium minutum (strain Pei191)).